The primary structure comprises 361 residues: ATP phosphoribosyltransferase regulatory subunit (361 aa).

Belongs to the class-II aminoacyl-tRNA synthetase family. HisZ subfamily. In terms of assembly, heteromultimer composed of HisG and HisZ subunits.

Its subcellular location is the cytoplasm. Its pathway is amino-acid biosynthesis; L-histidine biosynthesis; L-histidine from 5-phospho-alpha-D-ribose 1-diphosphate: step 1/9. Functionally, required for the first step of histidine biosynthesis. May allow the feedback regulation of ATP phosphoribosyltransferase activity by histidine. This chain is ATP phosphoribosyltransferase regulatory subunit, found in Thermus thermophilus (strain ATCC 27634 / DSM 579 / HB8).